We begin with the raw amino-acid sequence, 30 residues long: Diuretic hormone 2 (30 aa).

Valine 30 bears the Valine amide mark.

It belongs to the sauvagine/corticotropin-releasing factor/urotensin I family.

It is found in the secreted. Its function is as follows. Regulation of fluid secretion. In Manduca sexta (Tobacco hawkmoth), this protein is Diuretic hormone 2.